Consider the following 442-residue polypeptide: FBD-associated F-box protein At1g66310 (442 aa).

The F-box domain occupies 18-64 (VDWLRDLPESLLCHILLNLPTKDVVKTSVLSSKWRNLWRLVPGLDLD). Positions 363–415 (KRRTSVLSGPRRLLSSLEYVEIESPLTGEVFEMKLVSYLLENSPILKKLTINL) constitute an FBD domain.

The chain is FBD-associated F-box protein At1g66310 from Arabidopsis thaliana (Mouse-ear cress).